A 217-amino-acid chain; its full sequence is Transcription antitermination protein NusB (217 aa).

The protein belongs to the NusB family.

In terms of biological role, involved in transcription antitermination. Required for transcription of ribosomal RNA (rRNA) genes. Binds specifically to the boxA antiterminator sequence of the ribosomal RNA (rrn) operons. The polypeptide is Transcription antitermination protein NusB (Microcystis aeruginosa (strain NIES-843 / IAM M-2473)).